Here is a 901-residue protein sequence, read N- to C-terminus: Protein translocase subunit SecA (901 aa).

Residues Q87, 105–109 (GEGKT), and D512 contribute to the ATP site. The Zn(2+) site is built by C885, C887, C896, and H897.

Belongs to the SecA family. As to quaternary structure, monomer and homodimer. Part of the essential Sec protein translocation apparatus which comprises SecA, SecYEG and auxiliary proteins SecDF-YajC and YidC. It depends on Zn(2+) as a cofactor.

The protein localises to the cell inner membrane. It localises to the cytoplasm. The enzyme catalyses ATP + H2O + cellular proteinSide 1 = ADP + phosphate + cellular proteinSide 2.. Its function is as follows. Part of the Sec protein translocase complex. Interacts with the SecYEG preprotein conducting channel. Has a central role in coupling the hydrolysis of ATP to the transfer of proteins into and across the cell membrane, serving both as a receptor for the preprotein-SecB complex and as an ATP-driven molecular motor driving the stepwise translocation of polypeptide chains across the membrane. The chain is Protein translocase subunit SecA from Salmonella typhi.